A 212-amino-acid chain; its full sequence is Nascent polypeptide-associated complex subunit alpha (212 aa).

Disordered regions lie at residues 1–54 (MSNP…SRNE) and 123–177 (QLAA…EDKD). Residues 22–38 (AEDEGSDSSDSEAEGEE) show a composition bias toward acidic residues. An NAC-A/B domain is found at 51 to 116 (SRNEKKARKS…AKIEDLNSQA (66 aa)). A compositionally biased stretch (basic and acidic residues) spans 128–157 (ESHDHAGHDHSGHDHSHDHGKGKAVDTEEK). The segment covering 158–169 (KEEEEDDTEEVD) has biased composition (acidic residues). The region spanning 173–212 (LEDKDIELVMTQASVSRNKAVKALKENDNDIVNSIMALSI) is the UBA domain.

Belongs to the NAC-alpha family. As to quaternary structure, part of the nascent polypeptide-associated complex (NAC), consisting of EGD2 and EGD1. NAC associates with ribosomes via EGD1.

Its subcellular location is the cytoplasm. It localises to the nucleus. Functionally, component of the nascent polypeptide-associated complex (NAC), a dynamic component of the ribosomal exit tunnel, protecting the emerging polypeptides from interaction with other cytoplasmic proteins to ensure appropriate nascent protein targeting. The NAC complex also promotes mitochondrial protein import by enhancing productive ribosome interactions with the outer mitochondrial membrane and blocks the inappropriate interaction of ribosomes translating non-secretory nascent polypeptides with translocation sites in the membrane of the endoplasmic reticulum. EGD2 may also be involved in transcription regulation. This is Nascent polypeptide-associated complex subunit alpha (egd2) from Botryotinia fuckeliana (strain B05.10) (Noble rot fungus).